The sequence spans 103 residues: Protein FMC1 homolog (103 aa).

This sequence belongs to the FMC1 family.

This chain is Protein FMC1 homolog, found in Nematostella vectensis (Starlet sea anemone).